Reading from the N-terminus, the 710-residue chain is Low-temperature-induced 78 kDa protein (710 aa).

Disordered regions lie at residues 1–198 (MDQT…LDGQ), 225–269 (YQSK…RDLS), and 305–507 (GFGD…STYT). The segment covering 14 to 25 (QHPEEVEHHENG) has biased composition (basic and acidic residues). The span at 29 to 41 (MFRKVKARAKKFK) shows a compositional bias: basic residues. The segment covering 49 to 58 (QSNEHEQDHD) has biased composition (basic and acidic residues). Residues 59–73 (LVEEDDDDDELEPEV) show a composition bias toward acidic residues. The segment covering 138 to 168 (SDKEEKRDVPIHHPLSELSDREESRETHHES) has biased composition (basic and acidic residues). Residues 169–187 (LNTPVSLLSGTEDVTSTFA) are compositionally biased toward polar residues. A run of 5 repeats spans residues 303–316 (PVGFGDESGAELEK), 317–331 (DFPTRSHDFDMKTET), 336–350 (NSPSRSHEFDLKTES), 357–370 (PMGFGSESGAELEK), and 398–412 (NFPVRSHELDLKNES). Positions 303–370 (PVGFGDESGA…GSESGAELEK (68 aa)) are 2 X 14 AA repeats of P-[MV]-G-F-G-[DS]-E-S-G-A-E-L-E-K. 6 stretches are compositionally biased toward basic and acidic residues: residues 313–331 (ELEKDFPTRSHDFDMKTET), 340–352 (RSHEFDLKTESGN), 367–380 (ELEKEFDQKNDSGR), 402–418 (RSHELDLKNESDIDKDV), 442–466 (EDKFPARSDDVEVETELGRDPKTET), and 475–487 (SHPKERDEFKESR). A 3 X 15 AA repeats of [DN]-[FS]-P-[STV]-R-S-H-[DE]-[FL]-D-[LM]-K-[NT]-E-[ST] region spans residues 317–412 (DFPTRSHDFD…SHELDLKNES (96 aa)). Repeat copies occupy residues 510–514 (FASML), 532–536 (VDEKL), and 550–554 (VTTKL). Residues 510 to 600 (FASMLGYSGE…AFSDMVAEKL (91 aa)) form a 5 X 5 AA repeats of [FV]-[ADT]-[EST]-[KM]-L region. The disordered stretch occupies residues 537 to 577 (TPVNEKDQETESAVTTKLPISGGGSGVEEQRGEDKSVSGRD). The segment covering 564-577 (EEQRGEDKSVSGRD) has biased composition (basic and acidic residues). 2 consecutive repeat copies span residues 579 to 583 (VAEKL) and 596 to 600 (VAEKL). Positions 601–710 (QIGGEEEKKE…STVVPVQKEL (110 aa)) are disordered. The segment covering 605 to 626 (EEEKKETTTKEVEKISTEKAAS) has biased composition (basic and acidic residues). Residue Ser626 is modified to Phosphoserine. Residues 638 to 654 (GGGGMVGRIKGWFGGGA) show a composition bias toward gly residues. 2 repeat units span residues 648-670 (GWFGGGATDEVKPESPHSVEEAP) and 674-696 (GWFGGGATEEVKPKSPHSVEESP). A 2 X 23 AA repeats region spans residues 648–696 (GWFGGGATDEVKPESPHSVEEAPKSSGWFGGGATEEVKPKSPHSVEESP). Basic and acidic residues-rich tracts occupy residues 656–670 (DEVKPESPHSVEEAP) and 682–693 (EEVKPKSPHSVE).

Belongs to the LTI78/LTI65 family. Accumulates rapidly in leaves, stems, roots, flower petals, filaments, and sepals during cold-acclimation.

It localises to the cytoplasm. Involved in responses to abiotic stresses. Regulates probably root elongation in cold conditions. This chain is Low-temperature-induced 78 kDa protein, found in Arabidopsis thaliana (Mouse-ear cress).